A 149-amino-acid polypeptide reads, in one-letter code: Glutamate mutase sigma subunit (149 aa).

The 134-residue stretch at 5–138 (DPTVVLGTIG…DAVKTELDVD (134 aa)) folds into the B12-binding domain. Adenosylcob(III)alamin is bound by residues 15–19 (SDAHA), His18, 63–65 (SSL), and 94–98 (NLAVG).

Belongs to the methylaspartate mutase GlmS subunit family. Heterotetramer composed of 2 epsilon subunits (GlmE) and 2 sigma subunits (GlmS). GlmE exists as a homodimer and GlmS as a monomer. It depends on adenosylcob(III)alamin as a cofactor.

The enzyme catalyses (2S,3S)-3-methyl-L-aspartate = L-glutamate. Its pathway is amino-acid degradation; L-glutamate degradation via mesaconate pathway; acetate and pyruvate from L-glutamate: step 1/4. Catalyzes the carbon skeleton rearrangement of L-glutamate to L-threo-3-methylaspartate ((2S,3S)-3-methylaspartate). The polypeptide is Glutamate mutase sigma subunit (Halobacterium salinarum (strain ATCC 700922 / JCM 11081 / NRC-1) (Halobacterium halobium)).